Here is a 34-residue protein sequence, read N- to C-terminus: MEVNILAFIATALFISIPTAFLLIPYVQTATQSN.

Residues 5-25 traverse the membrane as a helical segment; the sequence is ILAFIATALFISIPTAFLLIP.

The protein belongs to the PsbM family. As to quaternary structure, PSII is composed of 1 copy each of membrane proteins PsbA, PsbB, PsbC, PsbD, PsbE, PsbF, PsbH, PsbI, PsbJ, PsbK, PsbL, PsbM, PsbT, PsbX, PsbY, PsbZ, Psb30/Ycf12, at least 3 peripheral proteins of the oxygen-evolving complex and a large number of cofactors. It forms dimeric complexes.

Its subcellular location is the plastid. It localises to the chloroplast thylakoid membrane. In terms of biological role, one of the components of the core complex of photosystem II (PSII). PSII is a light-driven water:plastoquinone oxidoreductase that uses light energy to abstract electrons from H(2)O, generating O(2) and a proton gradient subsequently used for ATP formation. It consists of a core antenna complex that captures photons, and an electron transfer chain that converts photonic excitation into a charge separation. This subunit is found at the monomer-monomer interface. This chain is Photosystem II reaction center protein M, found in Psilotum nudum (Whisk fern).